The primary structure comprises 403 residues: Probable eukaryotic initiation factor 4A (403 aa).

The disordered stretch occupies residues 1 to 29; it reads MAQNDKIAPQDQDSFLDDQPGVRPIPSFD. Positions 26-54 match the Q motif motif; sequence PSFDDMPLHQNLLRGIYSYGFEKPSSIQQ. In terms of domain architecture, Helicase ATP-binding spans 57–230; it reads IAPFTRGGDI…KKFMRDPVRI (174 aa). 70-77 contributes to the ATP binding site; it reads AQSGTGKT. The short motif at 178–181 is the DEAD box element; it reads DEAD. In terms of domain architecture, Helicase C-terminal spans 241 to 401; the sequence is GIKQFFIAVE…ELPVDFAAYL (161 aa).

It belongs to the DEAD box helicase family. eIF4A subfamily. EIF4F is a multi-subunit complex, the composition of which varies with external and internal environmental conditions. It is composed of at least EIF4A, EIF4E and EIF4G.

The enzyme catalyses ATP + H2O = ADP + phosphate + H(+). Functionally, ATP-dependent RNA helicase which is a subunit of the eIF4F complex involved in cap recognition and is required for mRNA binding to ribosome. In the current model of translation initiation, eIF4A unwinds RNA secondary structures in the 5'-UTR of mRNAs which is necessary to allow efficient binding of the small ribosomal subunit, and subsequent scanning for the initiator codon. This is Probable eukaryotic initiation factor 4A from Leishmania infantum.